Here is a 205-residue protein sequence, read N- to C-terminus: Small ribosomal subunit protein uS4 (205 aa).

Positions 1-16 (MSKRESSKYKIDRRMG) are enriched in basic and acidic residues. The interval 1–46 (MSKRESSKYKIDRRMGENIWGRPKSPVNRREYGPGQHGQRRKSKLS) is disordered. Residues 94–157 (SRLDAIVYRA…KQLVSVLESV (64 aa)) form the S4 RNA-binding domain.

Belongs to the universal ribosomal protein uS4 family. As to quaternary structure, part of the 30S ribosomal subunit. Contacts protein S5. The interaction surface between S4 and S5 is involved in control of translational fidelity.

Functionally, one of the primary rRNA binding proteins, it binds directly to 16S rRNA where it nucleates assembly of the body of the 30S subunit. In terms of biological role, with S5 and S12 plays an important role in translational accuracy. In Sinorhizobium fredii (strain NBRC 101917 / NGR234), this protein is Small ribosomal subunit protein uS4.